The following is a 93-amino-acid chain: Integration host factor subunit beta (93 aa).

Belongs to the bacterial histone-like protein family. In terms of assembly, heterodimer of an alpha and a beta chain.

This protein is one of the two subunits of integration host factor, a specific DNA-binding protein that functions in genetic recombination as well as in transcriptional and translational control. The chain is Integration host factor subunit beta (ihfB) from Mannheimia haemolytica (Pasteurella haemolytica).